Reading from the N-terminus, the 229-residue chain is Large ribosomal subunit protein bL19cy (229 aa).

The N-terminal 70 residues, 1 to 70 (MATSSHLLPQ…DSKKRKEFIA (70 aa)), are a transit peptide targeting the chloroplast.

The protein belongs to the bacterial ribosomal protein bL19 family. Part of the 50S ribosomal subunit.

It is found in the plastid. The protein localises to the chloroplast. Its function is as follows. Located at the 30S-50S ribosomal subunit interface and binds directly to 23S ribosomal RNA. This Arabidopsis thaliana (Mouse-ear cress) protein is Large ribosomal subunit protein bL19cy.